A 199-amino-acid chain; its full sequence is N-(5'-phosphoribosyl)anthranilate isomerase (199 aa).

It belongs to the TrpF family.

The enzyme catalyses N-(5-phospho-beta-D-ribosyl)anthranilate = 1-(2-carboxyphenylamino)-1-deoxy-D-ribulose 5-phosphate. It participates in amino-acid biosynthesis; L-tryptophan biosynthesis; L-tryptophan from chorismate: step 3/5. This is N-(5'-phosphoribosyl)anthranilate isomerase from Sulfolobus acidocaldarius (strain ATCC 33909 / DSM 639 / JCM 8929 / NBRC 15157 / NCIMB 11770).